We begin with the raw amino-acid sequence, 452 residues long: Bifunctional protein GlmU (452 aa).

Residues 1 to 232 (MTSRTSLTIV…EDEVRGINTK (232 aa)) are pyrophosphorylase. Residues 11–14 (LAAG), Lys-25, Gln-78, and 83–84 (GT) contribute to the UDP-N-acetyl-alpha-D-glucosamine site. Asp-108 is a binding site for Mg(2+). UDP-N-acetyl-alpha-D-glucosamine contacts are provided by Gly-144, Glu-158, Asn-173, and Asn-230. Residue Asn-230 participates in Mg(2+) binding. Residues 233–253 (AQLAEAEAVMQARLRQAALDA) form a linker region. An N-acetyltransferase region spans residues 254–452 (GVTMIAPETV…KTRGKTRPAK (199 aa)). Positions 319 and 337 each coordinate UDP-N-acetyl-alpha-D-glucosamine. His-349 serves as the catalytic Proton acceptor. UDP-N-acetyl-alpha-D-glucosamine contacts are provided by Tyr-352 and Asn-363. Acetyl-CoA is bound by residues Ala-366, 372 to 373 (NY), Ser-391, Ser-409, and Arg-426.

The protein in the N-terminal section; belongs to the N-acetylglucosamine-1-phosphate uridyltransferase family. In the C-terminal section; belongs to the transferase hexapeptide repeat family. Homotrimer. Requires Mg(2+) as cofactor.

The protein localises to the cytoplasm. It carries out the reaction alpha-D-glucosamine 1-phosphate + acetyl-CoA = N-acetyl-alpha-D-glucosamine 1-phosphate + CoA + H(+). It catalyses the reaction N-acetyl-alpha-D-glucosamine 1-phosphate + UTP + H(+) = UDP-N-acetyl-alpha-D-glucosamine + diphosphate. The protein operates within nucleotide-sugar biosynthesis; UDP-N-acetyl-alpha-D-glucosamine biosynthesis; N-acetyl-alpha-D-glucosamine 1-phosphate from alpha-D-glucosamine 6-phosphate (route II): step 2/2. It functions in the pathway nucleotide-sugar biosynthesis; UDP-N-acetyl-alpha-D-glucosamine biosynthesis; UDP-N-acetyl-alpha-D-glucosamine from N-acetyl-alpha-D-glucosamine 1-phosphate: step 1/1. It participates in bacterial outer membrane biogenesis; LPS lipid A biosynthesis. Catalyzes the last two sequential reactions in the de novo biosynthetic pathway for UDP-N-acetylglucosamine (UDP-GlcNAc). The C-terminal domain catalyzes the transfer of acetyl group from acetyl coenzyme A to glucosamine-1-phosphate (GlcN-1-P) to produce N-acetylglucosamine-1-phosphate (GlcNAc-1-P), which is converted into UDP-GlcNAc by the transfer of uridine 5-monophosphate (from uridine 5-triphosphate), a reaction catalyzed by the N-terminal domain. In Rhodopseudomonas palustris (strain BisA53), this protein is Bifunctional protein GlmU.